Consider the following 62-residue polypeptide: uncharacterized protein (62 aa).

Residues 1–62 (MSSTAEEMAA…SNGEAKRKEK (62 aa)) are disordered. Over residues 28–37 (TKSDRVEHKH) the composition is skewed to basic and acidic residues.

This is an uncharacterized protein from Caenorhabditis elegans.